Here is a 109-residue protein sequence, read N- to C-terminus: Oncomodulin-2 (109 aa).

2 EF-hand domains span residues 39 to 74 and 78 to 109; these read MSAS…FESG and LTES…MVHS. Residues D52, D54, S56, Y58, E63, D91, D93, D95, K97, and E102 each coordinate Ca(2+).

Belongs to the parvalbumin family.

This chain is Oncomodulin-2 (OCM2), found in Homo sapiens (Human).